The sequence spans 503 residues: MKLRAQPYDIEVGRYEVIINSADAEELGVLAGDRVQVKDKDTITAVVETTDAIVSPGKIGIYREAWESIKVVPDEVVEVLPAAKPKSVSFIRKKMDKQKLTSEEMHAIIEDIVDGNLTEVELTAFVTASYIYTMDSDEIEWMTRAMVKTGDQISFDVHPVMDHHSIGGVPGNKISLCIVPIIAAAGLLIPKTSSRAITGAGGSADLMEILCPVSFRADEIKKMTTKVGGCLVWGGATNIAPADDKIINVEYPLSIDPKSQLLASVMAKKFAVGADTMVLDIPCGNETKIPTVQEGRKLARDFMELGDRLGMKIECALTYGGTPLGRAIGGGVEVREAMVMLEKFEGPRSLLEKTIAISGMMLEMGGVAPKNEGAKMAVELVKSGKALQKFKEIIEVQGGDPKVTSDMVPIGDKVATVLSPQDGYVLEISNKRLVYMCRLAGAPHDKGVGVILHKKKGEYVKKGDGLFTLYADKEWKLDAAIKESLRNPIMMVEGMILEKIEVV.

AMP-binding positions include glycine 168, 194-199 (SRAITG), and serine 203. The Proton donor role is filled by aspartate 256. 2 residues coordinate AMP: serine 264 and lysine 288.

It belongs to the thymidine/pyrimidine-nucleoside phosphorylase family. Type 2 subfamily.

The enzyme catalyses AMP + phosphate = alpha-D-ribose 1,5-bisphosphate + adenine. It catalyses the reaction CMP + phosphate = cytosine + alpha-D-ribose 1,5-bisphosphate. It carries out the reaction UMP + phosphate = alpha-D-ribose 1,5-bisphosphate + uracil. Catalyzes the conversion of AMP and phosphate to adenine and ribose 1,5-bisphosphate (R15P). Exhibits phosphorylase activity toward CMP and UMP in addition to AMP. Functions in an archaeal AMP degradation pathway, together with R15P isomerase and RubisCO. The polypeptide is AMP phosphorylase (Methanocella arvoryzae (strain DSM 22066 / NBRC 105507 / MRE50)).